Consider the following 329-residue polypeptide: Prostaglandin reductase 1 (329 aa).

Threonine 18 carries the phosphothreonine modification. Residue serine 20 is modified to Phosphoserine. NADP(+)-binding positions include 152–155, lysine 178, tyrosine 193, asparagine 217, 239–245, 270–272, and asparagine 321; these read GAVG, CGAISVY, and FIV. Lysine 178 bears the N6-(2-hydroxyisobutyryl)lysine; alternate mark. At lysine 178 the chain carries N6-acetyllysine; alternate.

The protein belongs to the NADP-dependent oxidoreductase L4BD family. Monomer or homodimer. In terms of tissue distribution, detected in small intestine, kidney, liver, spleen and stomach (at protein level). Detected in small intestine, kidney and liver.

It localises to the cytoplasm. It carries out the reaction 13,14-dihydro-15-oxo-prostaglandin E1 + NADP(+) = 15-oxoprostaglandin E1 + NADPH + H(+). The catalysed reaction is 13,14-dihydro-15-oxo-prostaglandin E2 + NAD(+) = 15-oxoprostaglandin E2 + NADH + H(+). The enzyme catalyses 13,14-dihydro-15-oxo-prostaglandin F1alpha + NADP(+) = 15-oxoprostaglandin F1alpha + NADPH + H(+). It catalyses the reaction 13,14-dihydro-15-oxo-PGF2alpha + NADP(+) = 15-oxoprostaglandin F2alpha + NADPH + H(+). It carries out the reaction leukotriene B4 + NADP(+) = 12-oxo-leukotriene B4 + NADPH + H(+). The catalysed reaction is 20-hydroxy-leukotriene B4 + NADP(+) = 12-oxo-20-hydroxy-leukotriene B4 + NADPH + H(+). The enzyme catalyses 6-trans-leukotriene B4 + NADP(+) = 12-oxo-(5S)-hydroxy-(6E,8E,10E,14Z)-eicosatetraenoate + NADPH + H(+). It catalyses the reaction (5S,12S)-dihydroxy-(6E,10E,12E,14Z)-eicosatetraenoate + NADP(+) = 12-oxo-(5S)-hydroxy-(6E,8E,10E,14Z)-eicosatetraenoate + NADPH + H(+). It carries out the reaction an n-alkanal + NADP(+) = an alk-2-enal + NADPH + H(+). The catalysed reaction is hexanal + NADP(+) = (E)-hex-2-enal + NADPH + H(+). The enzyme catalyses octanal + NADP(+) = (2E)-octenal + NADPH + H(+). It catalyses the reaction decanal + NADP(+) = (2E)-decenal + NADPH + H(+). It carries out the reaction dodecanal + NADP(+) = (2E)-dodecenal + NADPH + H(+). The catalysed reaction is 4-hydroxynonanal + NADP(+) = (E)-4-hydroxynon-2-enal + NADPH + H(+). The enzyme catalyses pentan-2-one + NADP(+) = (E)-pent-3-en-2-one + NADPH + H(+). It catalyses the reaction nonan-2-one + NADP(+) = (3E)-nonen-2-one + NADPH + H(+). Functionally, NAD(P)H-dependent oxidoreductase involved in metabolic inactivation of pro- and anti-inflammatory eicosanoids: prostaglandins (PG), leukotrienes (LT) and lipoxins (LX). Catalyzes with high efficiency the reduction of the 13,14 double bond of 15-oxoPGs, including 15-oxo-PGE1, 15-oxo-PGE2, 15-oxo-PGF1-alpha and 15-oxo-PGF2-alpha. Catalyzes with lower efficiency the oxidation of the hydroxyl group at C12 of LTB4 and its derivatives, converting them into biologically less active 12-oxo-LTB4 metabolites. Reduces 15-oxo-LXA4 to 13,14 dihydro-15-oxo-LXA4, enhancing neutrophil recruitment at the inflammatory site. Plays a role in metabolic detoxification of alkenals and ketones. Reduces alpha,beta-unsaturated alkenals and ketones, particularly those with medium-chain length, showing highest affinity toward (2E)-decenal and (3E)-3-nonen-2-one. May inactivate 4-hydroxy-2-nonenal, a cytotoxic lipid constituent of oxidized low-density lipoprotein particles. This is Prostaglandin reductase 1 (Ptgr1) from Cavia porcellus (Guinea pig).